Here is a 403-residue protein sequence, read N- to C-terminus: Deubiquitinase and deneddylase Dub1 (403 aa).

Polar residues predominate over residues 1 to 11 (MLSPTNSTSKT). Residues 1-24 (MLSPTNSTSKTAPVPPRDSSKPVL) are disordered. The helical transmembrane segment at 40-60 (TALAVLLVVVTLGLILLFYSF) threads the bilayer. The interval 77–132 (KEQPTISIPVPLPSPPLAVPRPSTPPAPTPAISRPSTPSAPKPSTPPPLLPKAPKP) is disordered. 2 stretches are compositionally biased toward pro residues: residues 86–105 (VPLPSPPLAVPRPSTPPAPT) and 114–130 (PSAPKPSTPPPLLPKAP). Catalysis depends on residues His-277, Asp-294, and Cys-347.

The protein belongs to the peptidase C48 family.

Its subcellular location is the secreted. The protein resides in the host cell. It is found in the membrane. Effector proteins function to alter host cell physiology and promote bacterial survival in host tissues. This protease possesses deubiquitinating and deneddylating activities. The sequence is that of Deubiquitinase and deneddylase Dub1 (cdu1) from Chlamydia trachomatis serovar L2b (strain UCH-1/proctitis).